A 707-amino-acid polypeptide reads, in one-letter code: Elongation factor G (707 aa).

The 290-residue stretch at 8–297 (ERVRNIGIAA…AVVDYLPSPV (290 aa)) folds into the tr-type G domain. Residues 17–24 (AHIDAGKT), 96–100 (DTPGH), and 150–153 (NKMD) contribute to the GTP site.

The protein belongs to the TRAFAC class translation factor GTPase superfamily. Classic translation factor GTPase family. EF-G/EF-2 subfamily.

The protein resides in the cytoplasm. Functionally, catalyzes the GTP-dependent ribosomal translocation step during translation elongation. During this step, the ribosome changes from the pre-translocational (PRE) to the post-translocational (POST) state as the newly formed A-site-bound peptidyl-tRNA and P-site-bound deacylated tRNA move to the P and E sites, respectively. Catalyzes the coordinated movement of the two tRNA molecules, the mRNA and conformational changes in the ribosome. In Synechococcus sp. (strain JA-2-3B'a(2-13)) (Cyanobacteria bacterium Yellowstone B-Prime), this protein is Elongation factor G.